Here is a 360-residue protein sequence, read N- to C-terminus: Phospho-N-acetylmuramoyl-pentapeptide-transferase (360 aa).

10 helical membrane passes run 25–45 (RGILGVLTALSLALCLGPWMI), 73–93 (TMGGALILSAIGISTLLWADL), 97–117 (YVWVVLLVTLAFGAIGWVDDY), 132–152 (WKYFWQSVFGLGAAIFLYMTA), 168–188 (VSIPLGIGFVVLTYFVIVGSS), 199–219 (GLAIMPTVMVGGALGIFCYLS), 236–256 (AGELIVFCGALIGAGLGFLWF), 263–283 (VFMGDVGALALGAALGTIAVI), 288–308 (IVLFIMGGVFVMETLSVVIQV), and 338–358 (VIVRFWIITVILVLIGLATLK).

The protein belongs to the glycosyltransferase 4 family. MraY subfamily. Mg(2+) is required as a cofactor.

The protein resides in the cell inner membrane. The catalysed reaction is UDP-N-acetyl-alpha-D-muramoyl-L-alanyl-gamma-D-glutamyl-meso-2,6-diaminopimeloyl-D-alanyl-D-alanine + di-trans,octa-cis-undecaprenyl phosphate = di-trans,octa-cis-undecaprenyl diphospho-N-acetyl-alpha-D-muramoyl-L-alanyl-D-glutamyl-meso-2,6-diaminopimeloyl-D-alanyl-D-alanine + UMP. The protein operates within cell wall biogenesis; peptidoglycan biosynthesis. Functionally, catalyzes the initial step of the lipid cycle reactions in the biosynthesis of the cell wall peptidoglycan: transfers peptidoglycan precursor phospho-MurNAc-pentapeptide from UDP-MurNAc-pentapeptide onto the lipid carrier undecaprenyl phosphate, yielding undecaprenyl-pyrophosphoryl-MurNAc-pentapeptide, known as lipid I. In Pseudomonas fluorescens (strain ATCC BAA-477 / NRRL B-23932 / Pf-5), this protein is Phospho-N-acetylmuramoyl-pentapeptide-transferase.